A 205-amino-acid chain; its full sequence is GTP cyclohydrolase-2 (205 aa).

GTP is bound at residue 49 to 53; that stretch reads RLHSE. 3 residues coordinate Zn(2+): cysteine 54, cysteine 65, and cysteine 67. Residues glutamine 70, 92 to 94, and threonine 114 each bind GTP; that span reads EGR. The active-site Proton acceptor is the aspartate 126. Arginine 128 (nucleophile) is an active-site residue. Positions 149 and 154 each coordinate GTP.

The protein belongs to the GTP cyclohydrolase II family. The cofactor is Zn(2+).

The enzyme catalyses GTP + 4 H2O = 2,5-diamino-6-hydroxy-4-(5-phosphoribosylamino)-pyrimidine + formate + 2 phosphate + 3 H(+). It functions in the pathway cofactor biosynthesis; riboflavin biosynthesis; 5-amino-6-(D-ribitylamino)uracil from GTP: step 1/4. In terms of biological role, catalyzes the conversion of GTP to 2,5-diamino-6-ribosylamino-4(3H)-pyrimidinone 5'-phosphate (DARP), formate and pyrophosphate. This chain is GTP cyclohydrolase-2, found in Pseudomonas aeruginosa (strain UCBPP-PA14).